Reading from the N-terminus, the 238-residue chain is Nuclear transcription factor Y subunit B-9 (238 aa).

Residues 64 to 70 mediate DNA binding; sequence MPIANVI. The segment at 91–102 is subunit association domain (SAD); that stretch reads IQECVSEYISFV. Positions 203–238 are disordered; the sequence is RYYQNGSSGQDESSVGGGSSSSINGMPAFDHYGQYK. The segment covering 208–227 has biased composition (low complexity); the sequence is GSSGQDESSVGGGSSSSING.

The protein belongs to the NFYB/HAP3 subunit family. In terms of assembly, heterotrimeric transcription factor composed of three components, NF-YA, NF-YB and NF-YC. NF-YB and NF-YC must interact and dimerize for NF-YA association and DNA binding. Interacts with PRN1. In terms of tissue distribution, expressed in green siliques. Present in etiolated seedlings.

It is found in the nucleus. In terms of biological role, component of the NF-Y/HAP transcription factor complex. The NF-Y complex stimulates the transcription of various genes by recognizing and binding to a CCAAT motif in promoters. Acts as a central regulator of the embryogenesis. Required for the speciation of cotyledon identity and the completion of embryo maturation. Controls seed storage protein genes through the regulation of FUS3 and ABI3. Involved in the blue light (BL) and abscisic acid (ABA) signaling pathways. The protein is Nuclear transcription factor Y subunit B-9 (NFYB9) of Arabidopsis thaliana (Mouse-ear cress).